The sequence spans 571 residues: Urease subunit alpha (571 aa).

The region spanning 133 to 571 is the Urease domain; the sequence is GGIDTHVHFI…LPLTQRYFLF (439 aa). Residues His138, His140, and Lys221 each coordinate Ni(2+). An N6-carboxylysine modification is found at Lys221. His223 is a substrate binding site. Ni(2+)-binding residues include His250 and His276. The active-site Proton donor is the His324. Asp364 lines the Ni(2+) pocket.

It belongs to the metallo-dependent hydrolases superfamily. Urease alpha subunit family. As to quaternary structure, heterotrimer of UreA (gamma), UreB (beta) and UreC (alpha) subunits. Three heterotrimers associate to form the active enzyme. It depends on Ni cation as a cofactor. In terms of processing, carboxylation allows a single lysine to coordinate two nickel ions.

Its subcellular location is the cytoplasm. The catalysed reaction is urea + 2 H2O + H(+) = hydrogencarbonate + 2 NH4(+). It functions in the pathway nitrogen metabolism; urea degradation; CO(2) and NH(3) from urea (urease route): step 1/1. This chain is Urease subunit alpha, found in Staphylococcus saprophyticus subsp. saprophyticus (strain ATCC 15305 / DSM 20229 / NCIMB 8711 / NCTC 7292 / S-41).